Reading from the N-terminus, the 456-residue chain is UDP-N-acetylmuramoylalanine--D-glutamate ligase (456 aa).

121 to 127 (GTNGKTT) serves as a coordination point for ATP.

It belongs to the MurCDEF family.

It localises to the cytoplasm. The catalysed reaction is UDP-N-acetyl-alpha-D-muramoyl-L-alanine + D-glutamate + ATP = UDP-N-acetyl-alpha-D-muramoyl-L-alanyl-D-glutamate + ADP + phosphate + H(+). It functions in the pathway cell wall biogenesis; peptidoglycan biosynthesis. Its function is as follows. Cell wall formation. Catalyzes the addition of glutamate to the nucleotide precursor UDP-N-acetylmuramoyl-L-alanine (UMA). In Desulfotalea psychrophila (strain LSv54 / DSM 12343), this protein is UDP-N-acetylmuramoylalanine--D-glutamate ligase.